The chain runs to 238 residues: Uridylate kinase (238 aa).

12 to 15 (KLSG) provides a ligand contact to ATP. Gly-54 is a binding site for UMP. ATP-binding residues include Gly-55 and Arg-59. UMP contacts are provided by residues Asp-74 and 135-142 (TGNPYFTT). ATP is bound by residues Thr-162, Asn-163, Tyr-168, and Asp-171.

Belongs to the UMP kinase family. Homohexamer.

It is found in the cytoplasm. It carries out the reaction UMP + ATP = UDP + ADP. The protein operates within pyrimidine metabolism; CTP biosynthesis via de novo pathway; UDP from UMP (UMPK route): step 1/1. Its activity is regulated as follows. Inhibited by UTP. Functionally, catalyzes the reversible phosphorylation of UMP to UDP. The sequence is that of Uridylate kinase from Bradyrhizobium sp. (strain ORS 278).